The primary structure comprises 96 residues: Transcription and mRNA export factor ENY2 (96 aa).

This sequence belongs to the ENY2 family. As to quaternary structure, component of the nuclear pore complex (NPC)-associated TREX-2 complex (transcription and export complex 2). Component of the SAGA transcription coactivator-HAT complex. Within the SAGA complex, participates in a subcomplex of SAGA called the DUB module (deubiquitination module).

The protein localises to the nucleus. It is found in the nucleoplasm. Involved in mRNA export coupled transcription activation by association with both the TREX-2 and the SAGA complexes. The transcription regulatory histone acetylation (HAT) complex SAGA is a multiprotein complex that activates transcription by remodeling chromatin and mediating histone acetylation and deubiquitination. Within the SAGA complex, participates in a subcomplex that specifically deubiquitinates histones. The SAGA complex is recruited to specific gene promoters by activators, where it is required for transcription. The TREX-2 complex functions in docking export-competent ribonucleoprotein particles (mRNPs) to the nuclear entrance of the nuclear pore complex (nuclear basket). TREX-2 participates in mRNA export and accurate chromatin positioning in the nucleus by tethering genes to the nuclear periphery. This chain is Transcription and mRNA export factor ENY2, found in Taeniopygia guttata (Zebra finch).